The chain runs to 330 residues: tRNA (guanine(37)-N(1))-methyltransferase Trm5b (330 aa).

S-adenosyl-L-methionine-binding positions include arginine 173, 211–212 (DI), 238–239 (DS), and asparagine 252.

This sequence belongs to the class I-like SAM-binding methyltransferase superfamily. TRM5/TYW2 family.

It localises to the cytoplasm. The catalysed reaction is guanosine(37) in tRNA + S-adenosyl-L-methionine = N(1)-methylguanosine(37) in tRNA + S-adenosyl-L-homocysteine + H(+). Specifically methylates the N1 position of guanosine-37 in various tRNAs. The protein is tRNA (guanine(37)-N(1))-methyltransferase Trm5b of Pyrococcus abyssi (strain GE5 / Orsay).